We begin with the raw amino-acid sequence, 244 residues long: MKIDLNADLGEGCASDAELLTLVSSANIACGFHAGDAQTMQACVREAIKNGVAIGAHPSFPDRENFGRSAMQLPPETVYAQTLYQIGALATIARAQGGVMRHVKPHGMLYNQAAKEAQLADAIARAVYACDPALILVGLAGSELIRAGKQYGLTTREEVFADRGYQADGSLVPRSQPGALIENEEQALAQTLEMVQHGRVKSITGEWATVTAQTVCLHGDGEHALAFARRLRSTFAEKEIVVAA.

Belongs to the LamB/PxpA family. In terms of assembly, forms a complex composed of PxpA, PxpB and PxpC.

It carries out the reaction 5-oxo-L-proline + ATP + 2 H2O = L-glutamate + ADP + phosphate + H(+). Catalyzes the cleavage of 5-oxoproline to form L-glutamate coupled to the hydrolysis of ATP to ADP and inorganic phosphate. The chain is 5-oxoprolinase subunit A from Escherichia coli (strain SE11).